Consider the following 326-residue polypeptide: E3 ubiquitin-protein ligase SINAT3 (326 aa).

The tract at residues 1–44 (MDLDSMDCTSTMDVTDDEEIHQDRHSYASVSKHHHTNNNTTNVN) is disordered. The segment at 63 to 99 (CPVCTNSMYPPIHQCHNGHTLCSTCKARVHNRCPTCR) adopts an RING-type zinc-finger fold. Residues 113–306 (VAESLELPCK…KELKLRVTGR (194 aa)) are SBD. An SIAH-type zinc finger spans residues 116–176 (SLELPCKHMS…LVAHLRDDHK (61 aa)). Zn(2+)-binding residues include Cys121, Cys128, His140, Cys144, Cys151, Cys158, His170, and His175.

It belongs to the SINA (Seven in absentia) family. As to quaternary structure, interacts with SINAT6. Interacts with WAV3. Interacts with FREE1. Interacts with ELC/VPS23A.

The protein localises to the endosome. The protein resides in the multivesicular body. Its subcellular location is the cytoplasmic vesicle. It is found in the autophagosome. The enzyme catalyses S-ubiquitinyl-[E2 ubiquitin-conjugating enzyme]-L-cysteine + [acceptor protein]-L-lysine = [E2 ubiquitin-conjugating enzyme]-L-cysteine + N(6)-ubiquitinyl-[acceptor protein]-L-lysine.. The protein operates within protein modification; protein ubiquitination. In terms of biological role, E3 ubiquitin-protein ligase that mediates ubiquitination and subsequent proteasomal degradation of target proteins. E3 ubiquitin ligases accept ubiquitin from an E2 ubiquitin-conjugating enzyme in the form of a thioester and then directly transfers the ubiquitin to targeted substrates. It probably triggers the ubiquitin-mediated degradation of different substrates. Modulates directly the ubiquitination and proteasomal-dependent degradation of FREE1, a component of the ESCRT-I complex. Modulates directly the ubiquitination and proteasomal-dependent degradation of ELC/VPS23A, a component of the ESCRT-I complex. The sequence is that of E3 ubiquitin-protein ligase SINAT3 from Arabidopsis thaliana (Mouse-ear cress).